The following is a 157-amino-acid chain: Small ribosomal subunit protein uS7 (157 aa).

It belongs to the universal ribosomal protein uS7 family. Part of the 30S ribosomal subunit. Contacts proteins S9 and S11.

In terms of biological role, one of the primary rRNA binding proteins, it binds directly to 16S rRNA where it nucleates assembly of the head domain of the 30S subunit. Is located at the subunit interface close to the decoding center, probably blocks exit of the E-site tRNA. The sequence is that of Small ribosomal subunit protein uS7 from Borrelia garinii subsp. bavariensis (strain ATCC BAA-2496 / DSM 23469 / PBi) (Borreliella bavariensis).